The primary structure comprises 2271 residues: Protein Ycf2 (2271 aa).

ATP is bound at residue 1628-1635; that stretch reads GSIGTGRS.

It belongs to the Ycf2 family.

It is found in the plastid. Its subcellular location is the chloroplast stroma. In terms of biological role, probable ATPase of unknown function. Its presence in a non-photosynthetic plant (Epifagus virginiana) and experiments in tobacco indicate that it has an essential function which is probably not related to photosynthesis. This chain is Protein Ycf2, found in Illicium oligandrum (Star anise).